Here is a 624-residue protein sequence, read N- to C-terminus: Kelch-like protein diablo (624 aa).

Residues 1–55 (MGDPLLPGSTGLGSGSATAATGGSVTAGSGLGNGGTGGAERPPSPARLTHTSEKH) form a disordered region. Low complexity predominate over residues 15 to 28 (GSATAATGGSVTAG). Residues 29 to 38 (SGLGNGGTGG) are compositionally biased toward gly residues. One can recognise a BTB domain in the interval 73-140 (CDVVLNVGGR…CYTAHIIVEE (68 aa)). Positions 175–277 (CLGIRAFADT…SPKFLVGTVG (103 aa)) constitute a BACK domain. 6 Kelch repeats span residues 324-370 (VLFA…VLND), 372-418 (LYAV…VLDG), 419-465 (FLYA…VLSG), 467-512 (LYAI…VFNN), 514-559 (IYAV…VVNG), and 560-606 (QLYA…VMRA).

It functions in the pathway protein modification; protein ubiquitination. Probable substrate-specific adapter of an E3 ubiquitin-protein ligase complex which mediates the ubiquitination and subsequent proteasomal degradation of target proteins. May have a role in synapse differentiation and growth. This chain is Kelch-like protein diablo, found in Drosophila grimshawi (Hawaiian fruit fly).